The primary structure comprises 322 residues: Replication factor C small subunit (322 aa).

G50 to T57 is an ATP binding site.

This sequence belongs to the activator 1 small subunits family. RfcS subfamily. Heteromultimer composed of small subunits (RfcS) and large subunits (RfcL).

In terms of biological role, part of the RFC clamp loader complex which loads the PCNA sliding clamp onto DNA. The chain is Replication factor C small subunit from Halobacterium salinarum (strain ATCC 700922 / JCM 11081 / NRC-1) (Halobacterium halobium).